The primary structure comprises 131 residues: Small ribosomal subunit protein uS12 (131 aa).

The disordered stretch occupies residues 1 to 22; the sequence is MPTTQQLLRKGRKVLQKKSKVP. Over residues 9–20 the composition is skewed to basic residues; it reads RKGRKVLQKKSK. Asp89 carries the 3-methylthioaspartic acid modification. Residues 102–131 form a disordered region; that stretch reads LDTQGVKDRNKSRSKYGTKKPKAGAAAAKK. Positions 113-131 are enriched in basic residues; it reads SRSKYGTKKPKAGAAAAKK.

It belongs to the universal ribosomal protein uS12 family. As to quaternary structure, part of the 30S ribosomal subunit. Contacts proteins S8 and S17. May interact with IF1 in the 30S initiation complex.

Its function is as follows. With S4 and S5 plays an important role in translational accuracy. In terms of biological role, interacts with and stabilizes bases of the 16S rRNA that are involved in tRNA selection in the A site and with the mRNA backbone. Located at the interface of the 30S and 50S subunits, it traverses the body of the 30S subunit contacting proteins on the other side and probably holding the rRNA structure together. The combined cluster of proteins S8, S12 and S17 appears to hold together the shoulder and platform of the 30S subunit. This chain is Small ribosomal subunit protein uS12, found in Deinococcus radiodurans (strain ATCC 13939 / DSM 20539 / JCM 16871 / CCUG 27074 / LMG 4051 / NBRC 15346 / NCIMB 9279 / VKM B-1422 / R1).